A 255-amino-acid polypeptide reads, in one-letter code: tRNA (guanine-N(1)-)-methyltransferase (255 aa).

S-adenosyl-L-methionine-binding positions include Gly-121 and 141–146 (IGDYVL). The interval 236–255 (PVKAPNRAGRQKTPKNKTDG) is disordered. A compositionally biased stretch (basic residues) spans 244–255 (GRQKTPKNKTDG).

This sequence belongs to the RNA methyltransferase TrmD family. Homodimer.

Its subcellular location is the cytoplasm. It carries out the reaction guanosine(37) in tRNA + S-adenosyl-L-methionine = N(1)-methylguanosine(37) in tRNA + S-adenosyl-L-homocysteine + H(+). Its function is as follows. Specifically methylates guanosine-37 in various tRNAs. The sequence is that of tRNA (guanine-N(1)-)-methyltransferase from Bradyrhizobium diazoefficiens (strain JCM 10833 / BCRC 13528 / IAM 13628 / NBRC 14792 / USDA 110).